A 415-amino-acid polypeptide reads, in one-letter code: S-inosyl-L-homocysteine hydrolase (415 aa).

Residues aspartate 123 and glutamate 148 each coordinate substrate. 149–151 provides a ligand contact to NAD(+); that stretch reads TTT. Residues lysine 178 and aspartate 182 each coordinate substrate. Residues asparagine 183, 212–217, glutamate 235, 291–293, and asparagine 337 each bind NAD(+); these read GYGWCG and AGH.

Belongs to the adenosylhomocysteinase family. Exists both as a homotetramer and a homodimer, in a 4:1 ratio. It depends on NAD(+) as a cofactor.

Its subcellular location is the cytoplasm. It catalyses the reaction S-inosyl-L-homocysteine + H2O = L-homocysteine + inosine. It functions in the pathway amino-acid biosynthesis; S-adenosyl-L-methionine biosynthesis. Catalyzes the hydrolysis of S-inosyl-L-homocysteine (SIH) to L-homocysteine (Hcy) and inosine. Likely functions in a S-adenosyl-L-methionine (SAM) recycling pathway from S-adenosyl-L-homocysteine (SAH) produced from SAM-dependent methylation reactions. Can also catalyze the reverse reaction in vitro, i.e. the synthesis of SIH from Hcy and inosine. Is specific for SIH and inosine as it is unable to either hydrolyze SAH or synthesize SAH from adenosine and Hcy. This is S-inosyl-L-homocysteine hydrolase from Methanocaldococcus jannaschii (strain ATCC 43067 / DSM 2661 / JAL-1 / JCM 10045 / NBRC 100440) (Methanococcus jannaschii).